The primary structure comprises 322 residues: CRISPR-associated protein Cas1 1 (322 aa).

The Mn(2+) site is built by Glu-149, His-214, and Glu-229.

Belongs to the CRISPR-associated endonuclease Cas1 family. Homodimer, forms a heterotetramer with a Cas2 homodimer. Mg(2+) is required as a cofactor. Requires Mn(2+) as cofactor.

CRISPR (clustered regularly interspaced short palindromic repeat), is an adaptive immune system that provides protection against mobile genetic elements (viruses, transposable elements and conjugative plasmids). CRISPR clusters contain spacers, sequences complementary to antecedent mobile elements, and target invading nucleic acids. CRISPR clusters are transcribed and processed into CRISPR RNA (crRNA). Acts as a dsDNA endonuclease. Involved in the integration of spacer DNA into the CRISPR cassette. The sequence is that of CRISPR-associated protein Cas1 1 from Methanobrevibacter ruminantium (strain ATCC 35063 / DSM 1093 / JCM 13430 / OCM 146 / M1) (Methanobacterium ruminantium).